Here is a 180-residue protein sequence, read N- to C-terminus: NADH-quinone oxidoreductase subunit I (180 aa).

4Fe-4S ferredoxin-type domains lie at 50-80 (LTRD…LQKA) and 90-119 (EFFR…LTPD). Residues C60, C63, C66, C70, C99, C102, C105, and C109 each coordinate [4Fe-4S] cluster.

Belongs to the complex I 23 kDa subunit family. NDH-1 is composed of 13 different subunits. Subunits NuoA, H, J, K, L, M, N constitute the membrane sector of the complex. Requires [4Fe-4S] cluster as cofactor.

The protein localises to the cell inner membrane. The enzyme catalyses a quinone + NADH + 5 H(+)(in) = a quinol + NAD(+) + 4 H(+)(out). In terms of biological role, NDH-1 shuttles electrons from NADH, via FMN and iron-sulfur (Fe-S) centers, to quinones in the respiratory chain. The immediate electron acceptor for the enzyme in this species is believed to be ubiquinone. Couples the redox reaction to proton translocation (for every two electrons transferred, four hydrogen ions are translocated across the cytoplasmic membrane), and thus conserves the redox energy in a proton gradient. The polypeptide is NADH-quinone oxidoreductase subunit I (Shigella sonnei (strain Ss046)).